The following is a 517-amino-acid chain: Glutamate--tRNA ligase (517 aa).

The 'HIGH' region motif lies at 14 to 24 (PSPTGPLHIGG). The short motif at 266-270 (KLSKR) is the 'KMSKS' region element. Lys269 lines the ATP pocket.

Belongs to the class-I aminoacyl-tRNA synthetase family. Glutamate--tRNA ligase type 1 subfamily. As to quaternary structure, monomer.

It localises to the cytoplasm. It carries out the reaction tRNA(Glu) + L-glutamate + ATP = L-glutamyl-tRNA(Glu) + AMP + diphosphate. Catalyzes the attachment of glutamate to tRNA(Glu) in a two-step reaction: glutamate is first activated by ATP to form Glu-AMP and then transferred to the acceptor end of tRNA(Glu). The polypeptide is Glutamate--tRNA ligase (Cytophaga hutchinsonii (strain ATCC 33406 / DSM 1761 / CIP 103989 / NBRC 15051 / NCIMB 9469 / D465)).